A 1192-amino-acid chain; its full sequence is Reticulon-4 (1192 aa).

Residue Met1 is modified to N-acetylmethionine. The interval 1-204 (MEDLDQSPLV…ASEPVIRSSA (204 aa)) is disordered. At 1 to 1018 (MEDLDQSPLV…LYWRDIKKTG (1018 aa)) the chain is on the cytoplasmic side. Residues Ser7 and Ser15 each carry the phosphoserine modification. A compositionally biased stretch (acidic residues) spans 31 to 53 (PEDEEEEEEEEEEDEDEDLEELE). Residues 65–77 (AAPVPTAPAAGAP) show a composition bias toward low complexity. Over residues 87–101 (PPAPRGPLPAAPPVA) the composition is skewed to pro residues. Position 107 is a phosphoserine (Ser107). Residues 110–132 (PSPVSSTVPAPSPLSAAAVSPSK) are compositionally biased toward low complexity. Pro residues predominate over residues 141-150 (ARPPPPPPAS). Ser152 carries the post-translational modification Phosphoserine. Positions 159–173 (WTPPAPAPAAPPSTP) are enriched in pro residues. 5 positions are modified to phosphoserine: Ser181, Ser182, Ser184, Ser361, and Ser446. Residues 427–458 (DSLEQTNHEKDSESSNDDTSFPSTPEGIKDRS) are disordered. A Phosphothreonine modification is found at Thr450. The residue at position 511 (Ser511) is a Phosphoserine. Residues 722–734 (AKVEQPVPDHSEL) are compositionally biased toward basic and acidic residues. The interval 722–762 (AKVEQPVPDHSELVEDSSPDSEPVDLFSDDSIPDVPQKQDE) is disordered. Residues 735–753 (VEDSSPDSEPVDLFSDDSI) show a composition bias toward acidic residues. Residue Ser749 is modified to Phosphoserine. Phosphothreonine is present on Thr858. Phosphoserine is present on residues Ser881 and Ser991. One can recognise a Reticulon domain in the interval 1005 to 1192 (VVDLLYWRDI…KIPGLKRKAE (188 aa)). The chain crosses the membrane as a helical span at residues 1019-1039 (VVFGASLFLLLSLTVFSIVSV). At 1040 to 1133 (TAYIALALLS…LMWVFTYVGA (94 aa)) the chain is on the lumenal side. An N6-acetyllysine modification is found at Lys1104. The helical transmembrane segment at 1134–1154 (LFNGLTLLILALISLFSVPVI) threads the bilayer. The Cytoplasmic segment spans residues 1155–1192 (YERHQAQIDHYLGLANKNVKDAMAKIQAKIPGLKRKAE).

In terms of assembly, binds to RTN4R. Interacts with ATL1. Interacts with TMEM170A. Interacts with RTN4IP1. As to quaternary structure, interacts in trans with CNTNAP1. Interacts with REEP5. Interacts with synaptic plasticity regulator PANTS; the interaction results in enhanced RTN4-mediated inhibition of AMPA receptor clustering. Interacts with GPR50. Homodimer. Interacts with BAD/Bcl-xl and BCL2. Interact with RTN3. Interacts with NGBR. Interacts with SPTLC1. Interacts with GRAMD4. Interacts with CDH5. Interacts with BACE1 and BACE2. Interacts with REEP5. Interacts with RETREG3. In terms of assembly, interacts with BACE1 and BACE2. Interacts with TMEM33. As to expression, isoform A: is specifically expressed in brain and testis and weakly in heart and skeletal muscle. Isoform B: widely expressed except for the liver. Highly expressed in endothelial cells and vascular smooth muscle cells, including blood vessels and mesenteric arteries. Isoform C: is expressed in brain, skeletal muscle and adipocytes. Isoform D is testis-specific.

It is found in the endoplasmic reticulum membrane. The protein resides in the cell membrane. It localises to the synapse. Its subcellular location is the cell junction. Functionally, required to induce the formation and stabilization of endoplasmic reticulum (ER) tubules. They regulate membrane morphogenesis in the ER by promoting tubular ER production. They influence nuclear envelope expansion, nuclear pore complex formation and proper localization of inner nuclear membrane proteins. However each isoform have specific functions mainly depending on their tissue expression specificities. Its function is as follows. Developmental neurite growth regulatory factor with a role as a negative regulator of axon-axon adhesion and growth, and as a facilitator of neurite branching. Regulates neurite fasciculation, branching and extension in the developing nervous system. Involved in down-regulation of growth, stabilization of wiring and restriction of plasticity in the adult CNS. Regulates the radial migration of cortical neurons via an RTN4R-LINGO1 containing receptor complex. Acts as a negative regulator of central nervous system angiogenesis. Inhibits spreading, migration and sprouting of primary brain microvascular endothelial cells (MVECs). Also induces the retraction of MVECs lamellipodia and filopodia in a ROCK pathway-dependent manner. Mainly function in endothelial cells and vascular smooth muscle cells, is also involved in immune system regulation. Modulator of vascular remodeling, promotes the migration of endothelial cells but inhibits the migration of vascular smooth muscle cells. Regulates endothelial sphingolipid biosynthesis with direct effects on vascular function and blood pressure. Inhibits serine palmitoyltransferase, SPTLC1, the rate-limiting enzyme of the novo sphingolipid biosynthetic pathway, thereby controlling production of endothelial sphingosine-1-phosphate (S1P). Required to promote macrophage homing and functions such as cytokine/chemokine gene expression involved in angiogenesis, arteriogenesis and tissue repair. Mediates ICAM1 induced transendothelial migration of leukocytes such as monocytes and neutrophils and acute inflammation. Necessary for immune responses triggered by nucleic acid sensing TLRs, such as TLR9, is required for proper TLR9 location to endolysosomes. Also involved in immune response to LPS. Plays a role in liver regeneration through the modulation of hepatocytes proliferation. Reduces the anti-apoptotic activity of Bcl-xl and Bcl-2. This is likely consecutive to their change in subcellular location, from the mitochondria to the endoplasmic reticulum, after binding and sequestration. With isoform C, inhibits BACE1 activity and amyloid precursor protein processing. In terms of biological role, regulates cardiomyocyte apoptosis upon hypoxic conditions. With isoform B, inhibits BACE1 activity and amyloid precursor protein processing. The chain is Reticulon-4 from Homo sapiens (Human).